A 392-amino-acid polypeptide reads, in one-letter code: Protein O-glucosyltransferase 1 (392 aa).

The first 23 residues, 1-23 (MEWWASSPLRLWLLLFLLPSAQG), serve as a signal peptide directing secretion. 2 N-linked (GlcNAc...) asparagine glycosylation sites follow: asparagine 40 and asparagine 53. 4 disulfide bridges follow: cysteine 49–cysteine 56, cysteine 54–cysteine 357, cysteine 102–cysteine 108, and cysteine 263–cysteine 286. An interaction with the consensus sequence C-X-S-X-[PA]-C in peptide substrates region spans residues 103-107 (MFPSR). Residue aspartate 133 is the Proton donor/acceptor of the active site. Residues 172 to 178 (AVWPIYP) are interaction with the consensus sequence C-X-S-X-[PA]-C in peptide substrates. UDP-alpha-D-glucose is bound at residue tyrosine 177. The N-linked (GlcNAc...) asparagine glycan is linked to asparagine 204. UDP-alpha-D-glucose is bound by residues serine 212, arginine 218, and 274–279 (VAASFR). N-linked (GlcNAc...) asparagine glycosylation is present at asparagine 373. The short motif at 389–392 (KTEL) is the Prevents secretion from ER element.

It belongs to the glycosyltransferase 90 family. In terms of tissue distribution, expressed in most adult tissues at different intensities. Abundantly expressed in liver. Expressed also in brain, heart, skeletal muscle, spleen, kidney, placenta, lung and peripheral blood leukocyte. Not detectable in colon, thymus and small intestine. Expressed in the epidermis, especially in the upper parts, stratum spinosum and stratum granulosum (at protein level).

It localises to the endoplasmic reticulum lumen. The catalysed reaction is L-seryl-[EGF-like domain protein] + UDP-alpha-D-xylose = 3-O-(beta-D-xylosyl)-L-seryl-[EGF-like domain protein] + UDP + H(+). The enzyme catalyses L-seryl-[EGF-like domain protein] + UDP-alpha-D-glucose = 3-O-(beta-D-glucosyl)-L-seryl-[EGF-like domain protein] + UDP + H(+). It participates in protein modification; protein glycosylation. Dual specificity glycosyltransferase that catalyzes the transfer of glucose and xylose from UDP-glucose and UDP-xylose, respectively, to a serine residue found in the consensus sequence of C-X-S-X-P-C. Specifically targets extracellular EGF repeats of protein such as CRB2, F7, F9 and NOTCH2. Acts as a positive regulator of Notch signaling by mediating O-glucosylation of Notch, leading to regulate muscle development. Notch glucosylation does not affect Notch ligand binding. Required during early development to promote gastrulation: acts by mediating O-glucosylation of CRB2, which is required for CRB2 localization to the cell membrane. The protein is Protein O-glucosyltransferase 1 of Homo sapiens (Human).